The primary structure comprises 69 residues: Small integral membrane protein 20 (69 aa).

The Mitochondrial matrix segment spans residues 1–8 (MAAARNLR). The helical transmembrane segment at 9 to 29 (TALIFGGFISMVGAAFYPIYF) threads the bilayer. The Mitochondrial intermembrane segment spans residues 30–69 (RPLLRLEEYQKEQAVNRAGIVQEDVQPPGLKVWSDPFGRK). Phenylalanine amide is present on Phe-66.

As to quaternary structure, component of the MITRAC (mitochondrial translation regulation assembly intermediate of cytochrome c oxidase complex) complex, the core components of this complex being Coa3/Mitrac12 and Cox14. Interacts with Coa3/Mitrac12 and Cox4i1. Directly interacts with newly synthesized Mt-Co1/Cox1. As to expression, highly expressed in the hypothalamus, substantia nigra reticulata, Edinger-Westphal nucleus, and nucleus of the solitary tract/dorsal motor nucleus of the vagus, the spinal cord, and sensory ganglia (at protein level). Also expressed in the heart, thymus, esophagus, stomach, spleen, lung, pituitary gland, kidney, jejunum, duodenum, ileum, cerebrum, pons, and colon (at protein level). Expressed in preadipocytes and apidocytes (at protein level). Expressed in pancreatic islet cells (at protein level).

It is found in the mitochondrion inner membrane. The protein localises to the secreted. Component of the MITRAC (mitochondrial translation regulation assembly intermediate of cytochrome c oxidase complex) complex, that regulates cytochrome c oxidase assembly. Promotes the progression of complex assembly after the association of Mt-Co1/Cox11 with Cox4I1 and Cox6c. Chaperone-like assembly factor required to stabilize newly synthesized Mt-Co1/Cox1 and to prevent its premature turnover. Functionally, peptide involved in a broad spectrum of regulatory functions. Is a ligand for GPR173. As part of the reproductive cycle, it regulates gonadotropin-releasing hormone (GnRH) signaling in the hypothalamus and pituitary gland which augments the release of luteinizing hormone. More specifically, it regulates the expression of transcription factors CEBPB and POU2F1/OCT1 through the cAMP-PKA signaling pathway, which subsequently regulate the expression of GNRHR and KISS1. Plays a protective role in memory retention through activation of GNRHR. Regulates the secretion of AVP by hypothalamic neurons. Plays a role in the transduction of the itch sensation. Induces anxiolytic effects, reducing behavior associated with anxiety. Regulates food intake as well as satiation and satiety by increasing NUCB2 expression in neurons. In the ovary, it regulates follicular growth by stimulating granulosa cell proliferation by increasing the expression of GPR173, CREB1, CYP19A1, KITLG, FSHR, and LHCGR. It also increases the production of estradiol (E2). In the heart, it regulates contractility and relaxation by activating the AKT1-NOS3 and MAPK1-MAPK3 signaling pathways. It also plays a cardioprotective role during ischemia, where it activates the SAFE and RISK pathways. Stimulates the proliferation and differentiation of preadipocytes. In pancreatic islet cells, it induces proliferation of islet cells as well as the production of INS1 and INS2 through activation of the MAPK1-MAPK3 signaling pathways. The chain is Small integral membrane protein 20 from Rattus norvegicus (Rat).